The primary structure comprises 404 residues: Lipase lipl-3 (404 aa).

Positions methionine 1–alanine 20 are cleaved as a signal peptide. Residue asparagine 65 is glycosylated (N-linked (GlcNAc...) asparagine). The active-site Nucleophile is the serine 168. Asparagine 272 carries an N-linked (GlcNAc...) asparagine glycan. Catalysis depends on charge relay system residues aspartate 344 and histidine 376.

It belongs to the AB hydrolase superfamily. Lipase family.

The protein resides in the secreted. It localises to the lysosome lumen. In terms of biological role, lipase that, together with lipl-1, plays a role in the response to nutrient deprivation by controlling lipid metabolism. Specifically, involved in the breakdown of lipids during lipophagy, a process during which lipids contained in lipid droplets that have been delivered to lysosomes by autophagy are degraded. The sequence is that of Lipase lipl-3 from Caenorhabditis elegans.